Reading from the N-terminus, the 257-residue chain is Imidazole glycerol phosphate synthase subunit HisF (257 aa).

Active-site residues include aspartate 11 and aspartate 130.

It belongs to the HisA/HisF family. In terms of assembly, heterodimer of HisH and HisF.

Its subcellular location is the cytoplasm. It carries out the reaction 5-[(5-phospho-1-deoxy-D-ribulos-1-ylimino)methylamino]-1-(5-phospho-beta-D-ribosyl)imidazole-4-carboxamide + L-glutamine = D-erythro-1-(imidazol-4-yl)glycerol 3-phosphate + 5-amino-1-(5-phospho-beta-D-ribosyl)imidazole-4-carboxamide + L-glutamate + H(+). It participates in amino-acid biosynthesis; L-histidine biosynthesis; L-histidine from 5-phospho-alpha-D-ribose 1-diphosphate: step 5/9. Its function is as follows. IGPS catalyzes the conversion of PRFAR and glutamine to IGP, AICAR and glutamate. The HisF subunit catalyzes the cyclization activity that produces IGP and AICAR from PRFAR using the ammonia provided by the HisH subunit. The chain is Imidazole glycerol phosphate synthase subunit HisF from Shewanella woodyi (strain ATCC 51908 / MS32).